We begin with the raw amino-acid sequence, 138 residues long: Basic phospholipase A2 Cvv-N6 (138 aa).

Residues 1 to 16 (MRTFWIVALLLVGVEG) form the signal peptide. Cystine bridges form between Cys-42–Cys-131, Cys-44–Cys-60, Cys-59–Cys-111, Cys-65–Cys-138, Cys-66–Cys-104, Cys-73–Cys-97, and Cys-91–Cys-102. Residues Tyr-43, Gly-45, and Gly-47 each contribute to the Ca(2+) site. The active site involves His-63. A Ca(2+)-binding site is contributed by Asp-64. Asp-105 is an active-site residue.

Belongs to the phospholipase A2 family. Group II subfamily. D49 sub-subfamily. As to quaternary structure, monomer. Binds to calmodulin. Ca(2+) is required as a cofactor. Expressed by the venom gland.

The protein resides in the secreted. It catalyses the reaction a 1,2-diacyl-sn-glycero-3-phosphocholine + H2O = a 1-acyl-sn-glycero-3-phosphocholine + a fatty acid + H(+). With respect to regulation, heparin and wedelolactone inhibit the myotoxic activity. The PLA2 inhibitor, para-bromophenacyl bromide (BPB), inhibits enzymatic and myotoxic activities. In terms of biological role, snake venom phospholipase A2 (PLA2) that is myotoxic and displays moderate edema-inducing activity in rat paws. Does not show neurotoxic activity. PLA2 catalyzes the calcium-dependent hydrolysis of the 2-acyl groups in 3-sn-phosphoglycerides. The sequence is that of Basic phospholipase A2 Cvv-N6 from Crotalus viridis viridis (Prairie rattlesnake).